A 159-amino-acid polypeptide reads, in one-letter code: Ribosome maturation factor RimP (159 aa).

It belongs to the RimP family.

It localises to the cytoplasm. Its function is as follows. Required for maturation of 30S ribosomal subunits. This chain is Ribosome maturation factor RimP, found in Geotalea daltonii (strain DSM 22248 / JCM 15807 / FRC-32) (Geobacter daltonii).